We begin with the raw amino-acid sequence, 348 residues long: Protein RecA (348 aa).

Position 65–72 (65–72 (GPESSGKT)) interacts with ATP. The segment covering 326–336 (LLTPAEEKPET) has biased composition (basic and acidic residues). The segment at 326–348 (LLTPAEEKPETDAAPEIEENEEF) is disordered. The segment covering 338 to 348 (AAPEIEENEEF) has biased composition (acidic residues).

Belongs to the RecA family.

Its subcellular location is the cytoplasm. Functionally, can catalyze the hydrolysis of ATP in the presence of single-stranded DNA, the ATP-dependent uptake of single-stranded DNA by duplex DNA, and the ATP-dependent hybridization of homologous single-stranded DNAs. It interacts with LexA causing its activation and leading to its autocatalytic cleavage. The polypeptide is Protein RecA (Aliivibrio fischeri (strain ATCC 700601 / ES114) (Vibrio fischeri)).